Reading from the N-terminus, the 88-residue chain is Elongation factor 1-beta (88 aa).

Belongs to the EF-1-beta/EF-1-delta family.

In terms of biological role, promotes the exchange of GDP for GTP in EF-1-alpha/GDP, thus allowing the regeneration of EF-1-alpha/GTP that could then be used to form the ternary complex EF-1-alpha/GTP/AAtRNA. This chain is Elongation factor 1-beta, found in Haloarcula marismortui (strain ATCC 43049 / DSM 3752 / JCM 8966 / VKM B-1809) (Halobacterium marismortui).